Reading from the N-terminus, the 376-residue chain is Phytanoyl-CoA hydroxylase interacting protein-like (376 aa).

Phosphoserine occurs at positions 12 and 15. N-linked (GlcNAc...) asparagine glycosylation occurs at asparagine 23. The residue at position 25 (serine 25) is a Phosphoserine. Asparagine 37 is a glycosylation site (N-linked (GlcNAc...) asparagine). A Fibronectin type-III domain is found at 52-161 (VPRNIKISNI…EIIEFCTADY (110 aa)).

Belongs to the PHYHIP family.

Functionally, may play a role in the development of the central system. This chain is Phytanoyl-CoA hydroxylase interacting protein-like (PHYHIPL), found in Bos taurus (Bovine).